Here is a 1058-residue protein sequence, read N- to C-terminus: Carbamoyl phosphate synthase pyrimidine-specific large chain (1058 aa).

A carboxyphosphate synthetic domain region spans residues 1–401; sequence MPKRTDIHKI…ATLKAVRSLE (401 aa). ATP is bound by residues Arg-129, Arg-169, Gly-175, Gly-176, Gln-208, Ile-210, Glu-215, Gly-241, Ile-242, His-243, Gln-284, and Glu-298. Positions 133–327 constitute an ATP-grasp 1 domain; that stretch reads KALMEELGEP…IAKMAAKIAV (195 aa). Mg(2+)-binding residues include Gln-284, Glu-298, and Asn-300. Residues Gln-284, Glu-298, and Asn-300 each coordinate Mn(2+). Residues 402–546 are oligomerization domain; it reads IGVHHVEEPA…YGTYEFENES (145 aa). Positions 547-929 are carbamoyl phosphate synthetic domain; that stretch reads IVTKRPSVLV…ALYKAFEAAK (383 aa). The 191-residue stretch at 671–861 folds into the ATP-grasp 2 domain; sequence DKVIKALAIP…MAQVATRAIL (191 aa). ATP contacts are provided by Arg-707, Ser-746, Leu-748, Glu-752, Gly-777, Val-778, His-779, Ser-780, Gln-820, and Glu-832. The Mg(2+) site is built by Gln-820, Glu-832, and Asn-834. Mn(2+)-binding residues include Gln-820, Glu-832, and Asn-834. An MGS-like domain is found at 930 to 1058; sequence LHVPSHGNVL…ESQSFVTQAL (129 aa). An allosteric domain region spans residues 930 to 1058; it reads LHVPSHGNVL…ESQSFVTQAL (129 aa).

Belongs to the CarB family. As to quaternary structure, composed of two chains; the small (or glutamine) chain promotes the hydrolysis of glutamine to ammonia, which is used by the large (or ammonia) chain to synthesize carbamoyl phosphate. Tetramer of heterodimers (alpha,beta)4. The cofactor is Mg(2+). It depends on Mn(2+) as a cofactor.

The catalysed reaction is hydrogencarbonate + L-glutamine + 2 ATP + H2O = carbamoyl phosphate + L-glutamate + 2 ADP + phosphate + 2 H(+). It catalyses the reaction hydrogencarbonate + NH4(+) + 2 ATP = carbamoyl phosphate + 2 ADP + phosphate + 2 H(+). Its pathway is amino-acid biosynthesis; L-arginine biosynthesis; carbamoyl phosphate from bicarbonate: step 1/1. The protein operates within pyrimidine metabolism; UMP biosynthesis via de novo pathway; (S)-dihydroorotate from bicarbonate: step 1/3. In terms of biological role, small subunit of the glutamine-dependent carbamoyl phosphate synthetase (CPSase). CPSase catalyzes the formation of carbamoyl phosphate from the ammonia moiety of glutamine, carbonate, and phosphate donated by ATP, constituting the first step of the biosynthetic pathway leading to pyrimidine nucleotides. The large subunit (synthetase) binds the substrates ammonia (free or transferred from glutamine from the small subunit), hydrogencarbonate and ATP and carries out an ATP-coupled ligase reaction, activating hydrogencarbonate by forming carboxy phosphate which reacts with ammonia to form carbamoyl phosphate. This is Carbamoyl phosphate synthase pyrimidine-specific large chain (pyrAB) from Lactiplantibacillus plantarum (strain ATCC BAA-793 / NCIMB 8826 / WCFS1) (Lactobacillus plantarum).